A 313-amino-acid chain; its full sequence is 4-hydroxy-3-methylbut-2-enyl diphosphate reductase (313 aa).

Cys12 provides a ligand contact to [4Fe-4S] cluster. (2E)-4-hydroxy-3-methylbut-2-enyl diphosphate is bound by residues His41 and His74. Dimethylallyl diphosphate contacts are provided by His41 and His74. Positions 41 and 74 each coordinate isopentenyl diphosphate. Cys96 is a binding site for [4Fe-4S] cluster. Residue His124 coordinates (2E)-4-hydroxy-3-methylbut-2-enyl diphosphate. Dimethylallyl diphosphate is bound at residue His124. His124 lines the isopentenyl diphosphate pocket. Residue Glu126 is the Proton donor of the active site. Thr167 contributes to the (2E)-4-hydroxy-3-methylbut-2-enyl diphosphate binding site. Position 197 (Cys197) interacts with [4Fe-4S] cluster. (2E)-4-hydroxy-3-methylbut-2-enyl diphosphate is bound by residues Ser225, Ser226, Asn227, and Ser269. 4 residues coordinate dimethylallyl diphosphate: Ser225, Ser226, Asn227, and Ser269. Isopentenyl diphosphate contacts are provided by Ser225, Ser226, Asn227, and Ser269.

It belongs to the IspH family. [4Fe-4S] cluster is required as a cofactor.

It catalyses the reaction isopentenyl diphosphate + 2 oxidized [2Fe-2S]-[ferredoxin] + H2O = (2E)-4-hydroxy-3-methylbut-2-enyl diphosphate + 2 reduced [2Fe-2S]-[ferredoxin] + 2 H(+). The enzyme catalyses dimethylallyl diphosphate + 2 oxidized [2Fe-2S]-[ferredoxin] + H2O = (2E)-4-hydroxy-3-methylbut-2-enyl diphosphate + 2 reduced [2Fe-2S]-[ferredoxin] + 2 H(+). It functions in the pathway isoprenoid biosynthesis; dimethylallyl diphosphate biosynthesis; dimethylallyl diphosphate from (2E)-4-hydroxy-3-methylbutenyl diphosphate: step 1/1. Its pathway is isoprenoid biosynthesis; isopentenyl diphosphate biosynthesis via DXP pathway; isopentenyl diphosphate from 1-deoxy-D-xylulose 5-phosphate: step 6/6. In terms of biological role, catalyzes the conversion of 1-hydroxy-2-methyl-2-(E)-butenyl 4-diphosphate (HMBPP) into a mixture of isopentenyl diphosphate (IPP) and dimethylallyl diphosphate (DMAPP). Acts in the terminal step of the DOXP/MEP pathway for isoprenoid precursor biosynthesis. This chain is 4-hydroxy-3-methylbut-2-enyl diphosphate reductase, found in Baumannia cicadellinicola subsp. Homalodisca coagulata.